Consider the following 88-residue polypeptide: Gas vesicle protein A2 (88 aa).

The protein belongs to the gas vesicle GvpA family. In terms of assembly, the gas vesicle shell is 2 nm thick and consists of a single layer of this protein. It forms helical ribs nearly perpendicular to the long axis of the vesicle.

The protein localises to the gas vesicle shell. In terms of biological role, gas vesicles are hollow, gas filled proteinaceous nanostructures found in some microorganisms. During planktonic growth they allow positioning of the organism at a favorable depth for light or nutrient acquisition. GvpA forms the protein shell. Functionally, it is not clear if the 2 type A proteins in this organism are functionally redundant. Its function is as follows. When a minimal gvp locus (gvpA2-gvpR-gvpN-gvpF-gvpG-gvpL-gvpS-gvpK-gvpJ-gvpT-gvpU, called pNL29) is expressed in E.coli gas vesicles are made. The protein is Gas vesicle protein A2 of Priestia megaterium (Bacillus megaterium).